A 490-amino-acid polypeptide reads, in one-letter code: Betaine aldehyde dehydrogenase (490 aa).

K(+) is bound at residue Asn93. 150–152 is a binding site for NAD(+); the sequence is GAW. Lys162 functions as the Charge relay system in the catalytic mechanism. Position 176–179 (176–179) interacts with NAD(+); it reads KPSE. Residue Val180 participates in K(+) binding. 230–233 is a binding site for NAD(+); it reads GTAT. Leu246 contributes to the K(+) binding site. Catalysis depends on Glu252, which acts as the Proton acceptor. Positions 254, 286, and 387 each coordinate NAD(+). The active-site Nucleophile is Cys286. Cys286 is subject to Cysteine sulfenic acid (-SOH). K(+)-binding residues include Lys457 and Gly460. The Charge relay system role is filled by Glu464.

Belongs to the aldehyde dehydrogenase family. Dimer of dimers. The cofactor is K(+).

The enzyme catalyses betaine aldehyde + NAD(+) + H2O = glycine betaine + NADH + 2 H(+). It functions in the pathway amine and polyamine biosynthesis; betaine biosynthesis via choline pathway; betaine from betaine aldehyde: step 1/1. Its function is as follows. Involved in the biosynthesis of the osmoprotectant glycine betaine. Catalyzes the irreversible oxidation of betaine aldehyde to the corresponding acid. This chain is Betaine aldehyde dehydrogenase, found in Xanthomonas euvesicatoria pv. vesicatoria (strain 85-10) (Xanthomonas campestris pv. vesicatoria).